The following is a 209-amino-acid chain: Ribosomal RNA large subunit methyltransferase E (209 aa).

Positions 63, 65, 83, 99, and 124 each coordinate S-adenosyl-L-methionine. The active-site Proton acceptor is Lys164.

Belongs to the class I-like SAM-binding methyltransferase superfamily. RNA methyltransferase RlmE family.

It is found in the cytoplasm. The catalysed reaction is uridine(2552) in 23S rRNA + S-adenosyl-L-methionine = 2'-O-methyluridine(2552) in 23S rRNA + S-adenosyl-L-homocysteine + H(+). Functionally, specifically methylates the uridine in position 2552 of 23S rRNA at the 2'-O position of the ribose in the fully assembled 50S ribosomal subunit. The chain is Ribosomal RNA large subunit methyltransferase E from Colwellia psychrerythraea (strain 34H / ATCC BAA-681) (Vibrio psychroerythus).